We begin with the raw amino-acid sequence, 116 residues long: Ig heavy chain V region 1B43 (116 aa).

The signal sequence occupies residues methionine 1 to serine 18. A framework-1 region spans residues aspartate 19–threonine 48. Cysteine 40 and cysteine 114 form a disulfide bridge. The tract at residues serine 49 to tryptophan 53 is complementarity-determining-1. The tract at residues histidine 54–methionine 67 is framework-2. Positions glycine 68–serine 84 are complementarity-determining-2. Residues arginine 85–arginine 116 form a framework-3 region.

The polypeptide is Ig heavy chain V region 1B43 (Mus musculus (Mouse)).